The following is a 259-amino-acid chain: Leucine-rich repeat-containing protein 3B (259 aa).

The signal sequence occupies residues 1–33 (MNLVDLWLTRSLSMCLLLQSFVLMILCFHSASM). The LRRNT domain maps to 34-64 (CPKGCLCSSSGGLNVTCSNANLKEIPRDLPP). N-linked (GlcNAc...) asparagine glycosylation is present at N47. LRR repeat units lie at residues 65 to 86 (ETVL…IFKD), 89 to 110 (QLRV…AFKG), and 114 to 135 (TLQT…AFNN). Residue N94 is glycosylated (N-linked (GlcNAc...) asparagine). In terms of domain architecture, LRRCT spans 145 to 197 (NPWHCDCTLQQVLRSMASNHETAHNVICKTSVLDEHAGRPFLNAANDADLCNL). Residues 205 to 225 (AMLVTMFGWFTMVISYVVYYV) form a helical membrane-spanning segment.

It belongs to the LRRC3 family.

It is found in the membrane. The polypeptide is Leucine-rich repeat-containing protein 3B (LRRC3B) (Homo sapiens (Human)).